The primary structure comprises 402 residues: AA9 family lytic polysaccharide monooxygenase E (402 aa).

The signal sequence occupies residues 1–16; it reads MSRLVSFASLLAAVNA. His-17 is a Cu(2+) binding site. Cystine bridges form between Cys-72-Cys-194 and Cys-113-Cys-117. Asn-75 is a glycosylation site (N-linked (GlcNAc...) asparagine). His-102 contacts Cu(2+). Asn-154 is a glycosylation site (N-linked (GlcNAc...) asparagine). Residues His-180 and Gln-189 each contribute to the O2 site. Residue Tyr-191 participates in Cu(2+) binding. The CBM1 domain maps to 364–400; it reads GSNPLYAQCGGLNFKGASGCVAGATCKKMNPYYSQCV.

The protein belongs to the polysaccharide monooxygenase AA9 family. The cofactor is Cu(2+).

The protein resides in the secreted. It catalyses the reaction [(1-&gt;4)-beta-D-glucosyl]n+m + reduced acceptor + O2 = 4-dehydro-beta-D-glucosyl-[(1-&gt;4)-beta-D-glucosyl]n-1 + [(1-&gt;4)-beta-D-glucosyl]m + acceptor + H2O.. Its function is as follows. Lytic polysaccharide monooxygenase (LPMO) that depolymerizes crystalline and amorphous polysaccharides via the oxidation of scissile alpha- or beta-(1-4)-glycosidic bonds, yielding C1 or C4 oxidation products. Catalysis by LPMOs requires the reduction of the active-site copper from Cu(II) to Cu(I) by a reducing agent and H(2)O(2) or O(2) as a cosubstrate. In Emericella nidulans (strain FGSC A4 / ATCC 38163 / CBS 112.46 / NRRL 194 / M139) (Aspergillus nidulans), this protein is AA9 family lytic polysaccharide monooxygenase E.